We begin with the raw amino-acid sequence, 812 residues long: Probable inorganic carbon transporter subunit DabA (812 aa).

4 residues coordinate Zn(2+): cysteine 337, aspartate 339, histidine 499, and cysteine 514.

The protein belongs to the inorganic carbon transporter (TC 9.A.2) DabA family. As to quaternary structure, forms a complex with DabB. The cofactor is Zn(2+).

The protein resides in the cell inner membrane. Functionally, part of an energy-coupled inorganic carbon pump. The polypeptide is Probable inorganic carbon transporter subunit DabA (Xanthomonas oryzae pv. oryzae (strain MAFF 311018)).